The primary structure comprises 123 residues: Large ribosomal subunit protein uL14c (123 aa).

This sequence belongs to the universal ribosomal protein uL14 family. As to quaternary structure, part of the 50S ribosomal subunit.

It is found in the plastid. The protein resides in the chloroplast. Functionally, binds to 23S rRNA. The sequence is that of Large ribosomal subunit protein uL14c from Oryza nivara (Indian wild rice).